Reading from the N-terminus, the 1583-residue chain is Transcriptional activator GLI3 (1583 aa).

Methionine 1 carries the post-translational modification N-acetylmethionine. Composition is skewed to polar residues over residues 1-10 and 58-78; these read MEAQAHSSTA and ITMQ…PSTS. The disordered stretch occupies residues 1–78; the sequence is MEAQAHSSTA…NKISEEPSTS (78 aa). Arginine 175 carries the omega-N-methylarginine modification. Positions 368 to 475 are disordered; that stretch reads QSLGSAFGHS…DKDESKQEPE (108 aa). The segment covering 403-421 has biased composition (low complexity); the sequence is VQVSSGPSESSQSKPTSES. Residue lysine 438 forms a Glycyl lysine isopeptide (Lys-Gly) (interchain with G-Cter in SUMO2) linkage. A compositionally biased stretch (polar residues) spans 448–457; that stretch reads SRGQQEQPEG. The span at 461–474 shows a compositional bias: basic and acidic residues; the sequence is VKEEADKDESKQEP. Lysine 462 participates in a covalent cross-link: Glycyl lysine isopeptide (Lys-Gly) (interchain with G-Cter in SUMO2). 5 consecutive C2H2-type zinc fingers follow at residues 480 to 505, 513 to 540, 546 to 570, 576 to 601, and 607 to 632; these read TNCH…NNDH, FVCR…MRRH, HKCT…LRSH, YVCE…NRTH, and YVCK…KTVH. Residues 620-728 form a disordered region; it reads DPSSLRKHVK…PISNYSNSGL (109 aa). A compositionally biased stretch (basic and acidic residues) spans 632-648; it reads HGPEAHVTKKQRGDMHP. At serine 664 the chain carries Phosphoserine. Positions 684–699 are enriched in basic and acidic residues; it reads SKREECLQVKTVKAEK. Residues 703–726 show a composition bias toward low complexity; the sequence is SQPSPGGQSSCSSQQSPISNYSNS. The tract at residues 745–845 is mediates interaction with DZIP1; it reads DETPIMDSTI…VDFTVLNTLN (101 aa). Lysine 773 participates in a covalent cross-link: Glycyl lysine isopeptide (Lys-Gly) (interchain with G-Cter in ubiquitin). A Glycyl lysine isopeptide (Lys-Gly) (interchain with G-Cter in SUMO2); alternate cross-link involves residue lysine 779. Residue lysine 779 forms a Glycyl lysine isopeptide (Lys-Gly) (interchain with G-Cter in ubiquitin); alternate linkage. Glycyl lysine isopeptide (Lys-Gly) (interchain with G-Cter in ubiquitin) cross-links involve residues lysine 784 and lysine 800. Residues 809–828 are disordered; the sequence is GNGTQSNNNYSSGGPGTLLP. A compositionally biased stretch (polar residues) spans 810–820; that stretch reads NGTQSNNNYSS. Phosphoserine; by PKA occurs at positions 849, 865, 877, 907, 980, and 1006. Residues 863–880 are compositionally biased toward low complexity; that stretch reads RSSGISPCFSSRRSSEAS. Residues 863–918 are disordered; it reads RSSGISPCFSSRRSSEASQAEGRPQNVSVADSYDPISTDASRRSSEASQGDGLPSL. The segment at 1164–1189 is disordered; it reads EVSSGTSDLSSSKLKCGQQRPSAQQP. Low complexity predominate over residues 1166 to 1175; it reads SSGTSDLSSS.

It belongs to the GLI C2H2-type zinc-finger protein family. In terms of assembly, the phosphorylated form interacts with BTRC. The full-length GLI3 form (GLI3FL) interacts with SUFU and this interaction regulates the formation of either repressor or activator forms of GLI3. Its association with SUFU is regulated by Hh signaling and dissociation of the SUFU-GLI3 interaction requires the presence of the ciliary motor KIF3A. Interacts with KIF7. The activator form of GLI3 (GLI3A) but not the repressor form (GLI3R) can interact with TRPS1. Interacts with ZIC1. Interacts with ZIC3 (via C2H2-type domains 3, 4 and 5); the interaction enhances its transcriptional activity. Interacts with WRD11; the interaction associates EMX1 with GLI3. Interacts with DZIP1; retains GLI3 within the cytoplasm. Phosphorylated by DYRK2 (in vitro). Phosphorylated on multiple sites by protein kinase A (PKA) and phosphorylation by PKA primes further phosphorylation by CK1 and GSK3. Phosphorylation is essential for its proteolytic processing. In terms of processing, transcriptional repressor GLI3R, a C-terminally truncated form, is generated from the full-length GLI3 protein (GLI3FL/GLI3-190) through proteolytic processing. This process requires PKA-primed phosphorylation of GLI3, ubiquitination of GLI3 and the presence of BTRC. GLI3FL is complexed with SUFU in the cytoplasm and is maintained in a neutral state. Without the Hh signal, the SUFU-GLI3 complex is recruited to cilia, leading to the efficient processing of GLI3FL into GLI3R. GLI3R formation leads to its dissociation from SUFU, allowing it to translocate into the nucleus, and repress Hh target genes. When Hh signaling is initiated, SUFU dissociates from GLI3FL and this has two consequences. First, GLI3R production is halted. Second, free GLI3FL translocates to the nucleus, where it is phosphorylated, destabilized, and converted to a transcriptional activator (GLI3A). Phosphorylated in vitro by ULK3.

The protein resides in the nucleus. It localises to the cytoplasm. It is found in the cell projection. Its subcellular location is the cilium. Functionally, has a dual function as a transcriptional activator and a repressor of the sonic hedgehog (Shh) pathway, and plays a role in limb development. The full-length GLI3 form (GLI3FL) after phosphorylation and nuclear translocation, acts as an activator (GLI3A) while GLI3R, its C-terminally truncated form, acts as a repressor. A proper balance between the GLI3 activator and the repressor GLI3R, rather than the repressor gradient itself or the activator/repressor ratio gradient, specifies limb digit number and identity. In concert with TRPS1, plays a role in regulating the size of the zone of distal chondrocytes, in restricting the zone of PTHLH expression in distal cells and in activating chondrocyte proliferation. Binds to the minimal GLI-consensus sequence 5'-GGGTGGTC-3'. This Mus musculus (Mouse) protein is Transcriptional activator GLI3 (Gli3).